We begin with the raw amino-acid sequence, 180 residues long: UPF0340 protein llmg_0465 (180 aa).

This sequence belongs to the UPF0340 family.

This is UPF0340 protein llmg_0465 from Lactococcus lactis subsp. cremoris (strain MG1363).